The primary structure comprises 77 residues: U11-lycotoxin-Ls1d (77 aa).

The first 20 residues, 1–20 (MKLIIFTGLVLFAIVSLIEA), serve as a signal peptide directing secretion. A propeptide spanning residues 21–26 (EEESGR) is cleaved from the precursor.

This sequence belongs to the neurotoxin 19 (CSTX) family. 10 (U11-Lctx) subfamily. Post-translationally, contains 4 disulfide bonds. Expressed by the venom gland.

The protein resides in the secreted. This is U11-lycotoxin-Ls1d from Lycosa singoriensis (Wolf spider).